The chain runs to 442 residues: Testican-1 (442 aa).

Residues 1–21 (MPAIAVLAAAAAAWCFLQVDS) form the signal peptide. Intrachain disulfides connect Cys-89-Cys-100, Cys-94-Cys-110, Cys-139-Cys-169, Cys-142-Cys-162, Cys-151-Cys-183, Cys-316-Cys-340, Cys-351-Cys-358, and Cys-360-Cys-379. The region spanning 133–185 (PSNLVKCKPCPVAQSAMVCGSDGHTYTSKCKLEFHACSTGKSLNSLCDGPCPC) is the Kazal-like domain. The 67-residue stretch at 313–379 (GLPCQNEMNR…GSRKQGTVSC (67 aa)) folds into the Thyroglobulin type-1 domain. 2 disordered regions span residues 375-395 (GTVS…GGSV) and 420-442 (TRAV…GYIW). O-linked (Xyl...) (glycosaminoglycan) serine glycosylation is found at Ser-386 and Ser-391. Over residues 425 to 442 (EDDEDEDDDKEDEVGYIW) the composition is skewed to acidic residues.

Post-translationally, contains chondroitin sulfate and heparan sulfate O-linked oligosaccharides. Predominantly expressed in the postsynaptic area of pyramidal neurons.

The protein resides in the secreted. It localises to the extracellular space. It is found in the extracellular matrix. Its function is as follows. May play a role in cell-cell and cell-matrix interactions. May contribute to various neuronal mechanisms in the central nervous system. The sequence is that of Testican-1 (Spock1) from Mus musculus (Mouse).